Here is a 395-residue protein sequence, read N- to C-terminus: F-box/kelch-repeat protein SKIP25 (395 aa).

Residues 1-29 (MEKKLKRRESMSTTAAESPPAKRRRTVTG) form a disordered region. The F-box domain maps to 34 to 79 (ALIEGLPDHISEICLSLVHRPSLLSAVCTRWRRLLYSPEFPSFPSL). Kelch repeat units lie at residues 81–129 (ALFV…YRHP), 147–194 (LILI…ACDG), 196–245 (IYIA…FSRE), 246–299 (AIDA…AMEE), and 301–342 (ILYS…TQVT).

In terms of assembly, part of a SCF (ASK-cullin-F-box) protein ligase complex. Interacts with SKP1A/ASK1.

The protein localises to the nucleus. The protein operates within protein modification; protein ubiquitination. Functionally, component of SCF(ASK-cullin-F-box) E3 ubiquitin ligase complexes, which may mediate the ubiquitination and subsequent proteasomal degradation of target proteins. In Arabidopsis thaliana (Mouse-ear cress), this protein is F-box/kelch-repeat protein SKIP25 (SKIP25).